The sequence spans 134 residues: Large ribosomal subunit protein eL32 (134 aa).

The protein belongs to the eukaryotic ribosomal protein eL32 family.

The protein is Large ribosomal subunit protein eL32 (RpL32) of Drosophila acanthoptera (Fruit fly).